A 191-amino-acid chain; its full sequence is Transcription factor FapR (191 aa).

Residues 102–169 form the MaoC-like domain; sequence GIARGHHLFA…RILVTSHVNQ (68 aa).

This sequence belongs to the FapR family.

Functionally, transcriptional factor involved in regulation of membrane lipid biosynthesis by repressing genes involved in fatty acid and phospholipid metabolism. The polypeptide is Transcription factor FapR (Shouchella clausii (strain KSM-K16) (Alkalihalobacillus clausii)).